Consider the following 267-residue polypeptide: uncharacterized protein (267 aa).

Residues Ser-210 and Ser-224 each carry the phosphoserine modification.

Testis. Down-regulated in men with spermatocyte arrest.

Essential for normal spermatogenesis and male fertility. This is an uncharacterized protein from Homo sapiens (Human).